Reading from the N-terminus, the 582-residue chain is Aspartate--tRNA ligase (582 aa).

Residue glutamate 174 coordinates L-aspartate. The segment at 198–201 (QITK) is aspartate. Residue arginine 220 coordinates L-aspartate. Residues 220 to 222 (RDE) and glutamine 229 contribute to the ATP site. An L-aspartate-binding site is contributed by histidine 443. An ATP-binding site is contributed by glutamate 477. L-aspartate is bound at residue arginine 484. Residue 529-532 (GLDR) participates in ATP binding.

This sequence belongs to the class-II aminoacyl-tRNA synthetase family. Type 1 subfamily. As to quaternary structure, homodimer.

Its subcellular location is the cytoplasm. The enzyme catalyses tRNA(Asp) + L-aspartate + ATP = L-aspartyl-tRNA(Asp) + AMP + diphosphate. Its function is as follows. Catalyzes the attachment of L-aspartate to tRNA(Asp) in a two-step reaction: L-aspartate is first activated by ATP to form Asp-AMP and then transferred to the acceptor end of tRNA(Asp). This chain is Aspartate--tRNA ligase, found in Streptococcus pyogenes serotype M18 (strain MGAS8232).